The primary structure comprises 362 residues: F-box protein At1g54550 (362 aa).

The 47-residue stretch at 1–47 folds into the F-box domain; it reads MATVTDLPDDLVREIFSRVPLTSLRAVRSTCKKWNAISKYDILGKKA.

This Arabidopsis thaliana (Mouse-ear cress) protein is F-box protein At1g54550.